A 668-amino-acid chain; its full sequence is Fe(2+) transporter FeoB (668 aa).

A FeoB-type G domain is found at 3–165 (SYEIALIGNP…KKAISIAVKD (163 aa)). 10-17 (GNPNVGKS) lines the GTP pocket. Residues N21, A22, T24, and G25 each contribute to the Mg(2+) site. GTP is bound by residues 35–39 (GVTVE), 56–59 (DLPG), 116–119 (NKMD), and 145–147 (SAA). The next 8 membrane-spanning stretches (helical) occupy residues 344-364 (VGAVLVFFPILAFLFFAISFL), 386-406 (LPGKAVISMVMGFGCNVPAIM), 418-438 (ILTILINPLLSCSARLPIYAL), 450-470 (VVILSMYALGVVLALITAFLF), 515-535 (IIVFGVILVWVLSVYGPSGYL), 574-594 (ALVFGIIAKEVVVGSLAMLYG), 613-633 (AYAFMAFSLIYLPCIATLAVI), and 643-663 (LFAVTYEMILAYVVALVISVI).

It belongs to the TRAFAC class TrmE-Era-EngA-EngB-Septin-like GTPase superfamily. FeoB GTPase (TC 9.A.8) family. The crystallized N-terminal domain is a homodimer.

The protein resides in the cell membrane. Its function is as follows. Probable transporter of a GTP-driven Fe(2+) uptake system, might be able to transport Fe(2+) into or out of the cell. The sequence is that of Fe(2+) transporter FeoB from Methanocaldococcus jannaschii (strain ATCC 43067 / DSM 2661 / JAL-1 / JCM 10045 / NBRC 100440) (Methanococcus jannaschii).